The primary structure comprises 29 residues: Lambda-theraphotoxin-Ec2b (29 aa).

Cystine bridges form between C2–C16, C9–C21, and C15–C25.

Belongs to the neurotoxin 30 (phrixotoxin) family. Expressed by the venom gland.

The protein localises to the secreted. Insect-selective neurotoxin that potently blocks insect calcium-activated potassium (BKCa) channels (Slo-type) in cockroach dorsal unpaired median (DUM) neurons (IC(50)=25.3 nM). This occurs in the absence of any shifts in the voltage dependence of activation. May interact with the turret and/or loop region of the external entrance to the channel and does not project deeply into the pore of the channel. In vivo, does not show toxicity in mice after intracerebroventricular injection of up to 25 pmol/g (1.8 ug/20 g mouse). This is Lambda-theraphotoxin-Ec2b from Eucratoscelus constrictus (African red-rump baboon spider).